A 652-amino-acid chain; its full sequence is Acetyl-coenzyme A synthetase (652 aa).

Residues 191-194, Thr-311, and Asn-335 contribute to the CoA site; that span reads RAGR. Residues 387–389, 411–416, Asp-500, and Arg-515 each bind ATP; these read GEP and DTWWQT. Ser-523 is a CoA binding site. Residue Arg-526 participates in ATP binding. Val-537, His-539, and Ile-542 together coordinate Mg(2+). Arg-584 is a binding site for CoA. At Lys-609 the chain carries N6-acetyllysine; by Pat.

It belongs to the ATP-dependent AMP-binding enzyme family. Monomer. It depends on Mg(2+) as a cofactor. Acetylated. Deacetylation by the SIR2-homolog deacetylase activates the enzyme.

It carries out the reaction acetate + ATP + CoA = acetyl-CoA + AMP + diphosphate. Catalyzes the conversion of acetate into acetyl-CoA (AcCoA), an essential intermediate at the junction of anabolic and catabolic pathways. Acs undergoes a two-step reaction. In the first half reaction, Acs combines acetate with ATP to form acetyl-adenylate (AcAMP) intermediate. In the second half reaction, it can then transfer the acetyl group from AcAMP to the sulfhydryl group of CoA, forming the product AcCoA. Required for acetate recapture but not for acetate excretion when this organism is grown on ethanolamine. Its function is as follows. Enables the cell to use acetate during aerobic growth to generate energy via the TCA cycle, and biosynthetic compounds via the glyoxylate shunt. Acetylates CheY, the response regulator involved in flagellar movement and chemotaxis. This Salmonella typhimurium (strain LT2 / SGSC1412 / ATCC 700720) protein is Acetyl-coenzyme A synthetase.